Reading from the N-terminus, the 98-residue chain is NADH-ubiquinone oxidoreductase chain 4L (98 aa).

The next 3 helical transmembrane spans lie at leucine 2–phenylalanine 22, serine 29–leucine 49, and isoleucine 61–valine 81.

It belongs to the complex I subunit 4L family. Core subunit of respiratory chain NADH dehydrogenase (Complex I) which is composed of 45 different subunits.

The protein localises to the mitochondrion inner membrane. It catalyses the reaction a ubiquinone + NADH + 5 H(+)(in) = a ubiquinol + NAD(+) + 4 H(+)(out). Functionally, core subunit of the mitochondrial membrane respiratory chain NADH dehydrogenase (Complex I) which catalyzes electron transfer from NADH through the respiratory chain, using ubiquinone as an electron acceptor. Part of the enzyme membrane arm which is embedded in the lipid bilayer and involved in proton translocation. The sequence is that of NADH-ubiquinone oxidoreductase chain 4L (MT-ND4L) from Microcebus ravelobensis (Golden-brown mouse lemur).